We begin with the raw amino-acid sequence, 157 residues long: Protein snakeskin (157 aa).

The Cytoplasmic portion of the chain corresponds to 2–6; that stretch reads VSVQT. Residues 7 to 27 form a helical membrane-spanning segment; sequence IATIVVKTFKIVLNIIILVLY. Over 28–53 the chain is Extracellular; that stretch reads RTGYNGEFLGVGGTWNLNEEKNPDAE. Residues 54–74 traverse the membrane as a helical segment; it reads IVASGVIVGYLIYTLVQIVTF. Residues 75 to 87 are Cytoplasmic-facing; it reads LFGTTEHKRALSE. Residues 88 to 108 traverse the membrane as a helical segment; it reads IVMNFVGVFLWIAVGAVALHY. Residues 109 to 130 are Extracellular-facing; that stretch reads WGGYQGEHQFQFVFAEKQVGLA. A helical membrane pass occupies residues 131 to 151; the sequence is VGALCVINGAIYLLDTALSVI. Over 152 to 157 the chain is Cytoplasmic; sequence HFTKEM.

As to expression, expressed in midgut epithelium (at protein level).

It is found in the apicolateral cell membrane. Its subcellular location is the cell junction. The protein resides in the septate junction. Functionally, required for assembly of smooth septate junctions (sSJs). May be important for barrier function of the midgut epithelium. In Bombyx mori (Silk moth), this protein is Protein snakeskin.